A 70-amino-acid polypeptide reads, in one-letter code: Small ribosomal subunit protein bS18c (70 aa).

It belongs to the bacterial ribosomal protein bS18 family. In terms of assembly, part of the 30S ribosomal subunit.

It localises to the plastid. The protein localises to the chloroplast. This Pyropia yezoensis (Susabi-nori) protein is Small ribosomal subunit protein bS18c.